Here is a 407-residue protein sequence, read N- to C-terminus: Arylacetamide deacetylase-like 4 family member 1 (407 aa).

The Cytoplasmic portion of the chain corresponds to 1 to 4; the sequence is MLYL. Residues 5 to 25 traverse the membrane as a helical; Signal-anchor for type II membrane protein segment; sequence VGFLLATVCLLVLGVNVWVLI. The Lumenal segment spans residues 26–407; the sequence is DHFLTIDVPP…NAVVSYIKDL (382 aa). The Involved in the stabilization of the negatively charged intermediate by the formation of the oxyanion hole motif lies at 119-121; it reads HGG. The N-linked (GlcNAc...) asparagine glycan is linked to N168. Active-site residues include S193, D347, and H377.

The protein belongs to the 'GDXG' lipolytic enzyme family.

Its subcellular location is the membrane. The chain is Arylacetamide deacetylase-like 4 family member 1 from Mus musculus (Mouse).